The sequence spans 1087 residues: Exportin-7 (1087 aa).

Ala2 carries the N-acetylalanine modification. The Importin N-terminal domain maps to 30 to 96 (AEKALVEFTN…RNYVLNYLAT (67 aa)). The residue at position 570 (Ser570) is a Phosphoserine.

Belongs to the exportin family. Binds to nucleoporins. Found in a complex with XPO7, EIF4A1, ARHGAP1, VPS26A, VPS29, VPS35 and SFN. Interacts with ARHGAP1 and SFN. Interacts with Ran and cargo proteins in a GTP-dependent manner. As to expression, highly expressed in testis and spleen, moderate in kidney and liver and low in heart, brain, lung and skeletal muscle.

The protein resides in the cytoplasm. Its subcellular location is the nucleus. Functionally, mediates the nuclear export of proteins (cargos) with broad substrate specificity. In the nucleus binds cooperatively to its cargo and to the GTPase Ran in its active GTP-bound form. Docking of this trimeric complex to the nuclear pore complex (NPC) is mediated through binding to nucleoporins. Upon transit of a nuclear export complex into the cytoplasm, disassembling of the complex and hydrolysis of Ran-GTP to Ran-GDP (induced by RANBP1 and RANGAP1, respectively) cause release of the cargo from the export receptor. XPO7 then return to the nuclear compartment and mediate another round of transport. The directionality of nuclear export is thought to be conferred by an asymmetric distribution of the GTP- and GDP-bound forms of Ran between the cytoplasm and nucleus. This is Exportin-7 (Xpo7) from Mus musculus (Mouse).